We begin with the raw amino-acid sequence, 226 residues long: Urease accessory protein UreF (226 aa).

Belongs to the UreF family. In terms of assembly, ureD, UreF and UreG form a complex that acts as a GTP-hydrolysis-dependent molecular chaperone, activating the urease apoprotein by helping to assemble the nickel containing metallocenter of UreC. The UreE protein probably delivers the nickel.

It localises to the cytoplasm. Its function is as follows. Required for maturation of urease via the functional incorporation of the urease nickel metallocenter. The sequence is that of Urease accessory protein UreF from Janthinobacterium sp. (strain Marseille) (Minibacterium massiliensis).